The primary structure comprises 369 residues: Dof zinc finger protein DOF2.5 (369 aa).

The Dof-type zinc finger occupies 80-134 (LNCPRCNSTNTKFCYYNNYSLTQPRYFCKGCRRYWTEGGSLRNVPVGGSSRKNKR). Zn(2+) is bound by residues cysteine 82, cysteine 85, cysteine 107, and cysteine 110. Disordered stretches follow at residues 120 to 149 (LRNVPVGGSSRKNKRSSSSSSSNILQTIPS), 203 to 224 (EGNGNITHQQQPSSSSSVYGSS), 284 to 304 (TDHQGLGHNSNNRSEALHSDH), and 322 to 369 (SSSI…GSSW). Low complexity predominate over residues 214–224 (PSSSSSVYGSS). Residues 284–297 (TDHQGLGHNSNNRS) are compositionally biased toward polar residues. Over residues 342–362 (NNNNNNNSSPNNGYWSGMFST) the composition is skewed to low complexity.

In terms of tissue distribution, expressed in the vascular system of the mother plant, but not present in the seed and embryo. In maturing siliques, found all through the funiculus connecting the placenta to the ovule, but not in the ovule.

The protein resides in the nucleus. In terms of biological role, transcription factor specifically involved in the maternal control of seed germination. Regulates transcription by binding to a 5'-AA[AG]G-3' consensus core sequence. May ensure the activation of a component that would trigger germination as a consequence of red light perception. The polypeptide is Dof zinc finger protein DOF2.5 (DOF2.5) (Arabidopsis thaliana (Mouse-ear cress)).